An 880-amino-acid polypeptide reads, in one-letter code: DNA-directed RNA polymerase subunit Rpo1N (880 aa).

Residues C58, C61, C68, and H71 each coordinate Zn(2+). DsDNA contacts are provided by residues K88 and 92-95 (EFLK). 2 residues coordinate Zn(2+): C98 and C101. Residue K138 coordinates dsDNA. Positions 146 and 149 each coordinate Zn(2+). Residues K303, 305 to 310 (KEGRFR), R323, and Q422 contribute to the dsDNA site. Positions 456, 458, and 460 each coordinate Mg(2+). R573, C575, C580, and H582 together coordinate Zn(2+). DsDNA is bound by residues 812–822 (RTSQSGYMQRR) and Q815.

The protein belongs to the RNA polymerase beta' chain family. As to quaternary structure, part of the 13-subunit RNA polymerase complex. Rpo1N and Rpo5 form a cleft which docks Rpo13. Interacts with Rpo8 on the periphery of the clamp head. It depends on Mg(2+) as a cofactor. The cofactor is Zn(2+).

It is found in the cytoplasm. The catalysed reaction is RNA(n) + a ribonucleoside 5'-triphosphate = RNA(n+1) + diphosphate. DNA-dependent RNA polymerase (RNAP) catalyzes the transcription of DNA into RNA using the four ribonucleoside triphosphates as substrates. Forms the clamp head domain. The polypeptide is DNA-directed RNA polymerase subunit Rpo1N (Saccharolobus shibatae (strain ATCC 51178 / DSM 5389 / JCM 8931 / NBRC 15437 / B12) (Sulfolobus shibatae)).